A 553-amino-acid chain; its full sequence is Mucolipin-3 (553 aa).

Topologically, residues 1–62 (MANPEVLVSS…FWARGRKPWK (62 aa)) are cytoplasmic. Residues 52-62 (KFWARGRKPWK) form an interaction with phosphoinositides region. Residues 63–83 (LAIQILKIAMVTIQLVLFGLS) form a helical membrane-spanning segment. Over 84-283 (NQMVVAFKEE…VSGSIQKNTH (200 aa)) the chain is Extracellular. Residues 104 to 118 (KGYMDRMDDTYAVYT) are extracellular/lumenal pore loop. The N-linked (GlcNAc...) asparagine glycan is linked to Asn-138. Cys-159 and Cys-185 form a disulfide bridge. The N-linked (GlcNAc...) asparagine glycan is linked to Asn-205. An intrachain disulfide couples Cys-238 to Cys-269. Residues 284–304 (YMMIFDAFVILTCLASLVLCA) form a helical membrane-spanning segment. The Cytoplasmic portion of the chain corresponds to 305-341 (RSVIRGLQLQQEFVNFFLLHYKKEVSASDQMEFINGW). A helical transmembrane segment spans residues 342–362 (YIMIIISDILTIVGSVLKMEI). Topologically, residues 363-371 (QAKSLTSYD) are extracellular. The helical transmembrane segment at 372-392 (VCSILLGTSTMLVWLGVIRYL) threads the bilayer. Residues 393-414 (GFFAKYNLLILTLQAALPNVMR) are Cytoplasmic-facing. A helical transmembrane segment spans residues 415 to 435 (FCCCAAMIYLGYCFCGWIVLG). The Extracellular segment spans residues 436-443 (PYHEKFRS). An intramembrane region (pore-forming) is located at residues 444 to 464 (LNRVSECLFSLINGDDMFSTF). The short motif at 456-459 (NGDD) is the Selectivity filter element. Over 465–475 (AKMQQKSYLVW) the chain is Extracellular. Residues 476 to 497 (LFSRVYLYSFISLFIYMILSLF) traverse the membrane as a helical segment. Residues 498–553 (IALITDTYETIKHYQQDGFPETELRKFIAECKDLPNSGKYRLEDDPPGSLLCCCKK) are Cytoplasmic-facing.

It belongs to the transient receptor (TC 1.A.4) family. Polycystin subfamily. MCOLN3 sub-subfamily. As to quaternary structure, homotetramer. Can heterooligomerize with MCOLN1; heteromeric assemblies have different channel properties as compared to the respective homooligomers and may be tissue-specific. May heterooligomerize with TRPV5 to form a functional distinct ion channel. Interacts with GABARAPL2. N-glycosylated. In terms of tissue distribution, expressed in the cochlea; particularly in the inner and outer hair cells (at protein level).

It is found in the early endosome membrane. The protein localises to the late endosome membrane. It localises to the cytoplasmic vesicle. The protein resides in the autophagosome membrane. Its subcellular location is the cell projection. It is found in the stereocilium membrane. It carries out the reaction Ca(2+)(in) = Ca(2+)(out). The enzyme catalyses Mg(2+)(in) = Mg(2+)(out). The catalysed reaction is K(+)(in) = K(+)(out). It catalyses the reaction Na(+)(in) = Na(+)(out). With respect to regulation, channel activity is activated by PtdIns(3,5)P2 (phosphatidylinositol 3,5-bisphosphate). Inhibited by lumenal H(+) and Na(+). The channel pore shows dynamic behavior and undergoes spontaneous, Ca(2+)-dependent modulation when conducting Ca(2+). Functionally, nonselective cation channel probably playing a role in the regulation of membrane trafficking events. Acts as a Ca(2+)-permeable cation channel with inwardly rectifying activity. Mediates release of Ca(2+) from endosomes to the cytoplasm, contributes to endosomal acidification and is involved in the regulation of membrane trafficking and fusion in the endosomal pathway. Also permeable to Mg(2+), Na(+) and K(+). Does not seem to act as mechanosensory transduction channel in inner ear sensory hair cells. Proposed to play a critical role at the cochlear stereocilia ankle-link region during hair-bundle growth. Involved in the regulation of autophagy. Through association with GABARAPL2 may be involved in autophagosome formation possibly providing Ca(2+) for the fusion process. Through a possible and probably tissue-specific heteromerization with MCOLN1 may be at least in part involved in many lysosome-dependent cellular events. Possible heteromeric ion channel assemblies with TRPV5 show pharmacological similarity with TRPML3. The sequence is that of Mucolipin-3 (Mcoln3) from Mus musculus (Mouse).